The chain runs to 204 residues: Lymphotoxin-alpha (204 aa).

The signal sequence occupies residues 1–33; it reads MTPPGRLYLLRVCSTPPLLLLGLLLALPLEAQG. In terms of domain architecture, THD spans 62–204; it reads PAAHLVGDPS…SSVFFGAFAL (143 aa). An N-linked (GlcNAc...) asparagine glycan is attached at Asn95. Cys119 and Cys155 are joined by a disulfide.

Belongs to the tumor necrosis factor family. In terms of assembly, homotrimer, and heterotrimer of either two LTB and one LTA subunits or (less prevalent) two LTA and one LTB subunits. Interacts with TNFRSF14.

The protein resides in the secreted. The protein localises to the membrane. Functionally, cytokine that in its homotrimeric form binds to TNFRSF1A/TNFR1, TNFRSF1B/TNFBR and TNFRSF14/HVEM. In its heterotrimeric form with LTB binds to TNFRSF3/LTBR. Lymphotoxin is produced by lymphocytes and is cytotoxic for a wide range of tumor cells in vitro and in vivo. The protein is Lymphotoxin-alpha (LTA) of Bos taurus (Bovine).